Reading from the N-terminus, the 90-residue chain is UPF0335 protein RPD_1405 (90 aa).

The protein belongs to the UPF0335 family.

This Rhodopseudomonas palustris (strain BisB5) protein is UPF0335 protein RPD_1405.